A 418-amino-acid polypeptide reads, in one-letter code: Serine/threonine transporter SstT (418 aa).

8 consecutive transmembrane segments (helical) span residues 21–41 (ILIGLVAGIVLALVSTPAAIA), 49–69 (FVGALKAVAPVLVLMLVIASI), 83–103 (ILFLYVLGTFSAALVAVVVSF), 142–162 (ALLNANYIGILAWAVGLGIAL), 190–210 (FAPLGIFGLVASTIAATGFGA), 217–237 (LLVVLIGCMLLVALVVNPLIV), 299–319 (MAGAAITITVLTLAAVHTLGI), and 331–351 (VVAAICACGASGVAGGSLLLI).

This sequence belongs to the dicarboxylate/amino acid:cation symporter (DAACS) (TC 2.A.23) family.

The protein resides in the cell inner membrane. It carries out the reaction L-serine(in) + Na(+)(in) = L-serine(out) + Na(+)(out). The enzyme catalyses L-threonine(in) + Na(+)(in) = L-threonine(out) + Na(+)(out). Functionally, involved in the import of serine and threonine into the cell, with the concomitant import of sodium (symport system). This is Serine/threonine transporter SstT from Yersinia pestis bv. Antiqua (strain Antiqua).